Here is a 432-residue protein sequence, read N- to C-terminus: 2-oxoglutarate-dependent dioxygenase AOP2 (432 aa).

Residues 281–378 (SGDDVEANDD…RYTAAIFTCP (98 aa)) enclose the Fe2OG dioxygenase domain. The Fe cation site is built by H301, D303, and H358. 2-oxoglutarate is bound at residue R369.

It belongs to the iron/ascorbate-dependent oxidoreductase family. It depends on Fe(2+) as a cofactor.

Its function is as follows. 2-oxoglutarate-dependent dioxygenase involved in glucosinolates biosynthesis. Catalyzes the conversion of methylsulfinylalkyl glucosinolates to alkenyl glucosinolates. This is 2-oxoglutarate-dependent dioxygenase AOP2 (AOP2) from Arabidopsis thaliana (Mouse-ear cress).